Consider the following 842-residue polypeptide: Cation/H(+) antiporter 20 (842 aa).

Helical transmembrane passes span 26–46, 55–75, 86–106, 122–142, 155–175, 193–213, 228–248, 283–303, 320–340, 353–373, 380–400, and 413–433; these read FPLLIVQTALIIAVSRFLAVL, VIAEIVGGILLGPSALGRNMA, MPILESVASIGLLFFLFLVGL, GIAVAGITLPFIAGVGVAFVI, YAEFLVFMGVALSITAFPVLA, MAAAAFNDVAAWILLALAVAL, LVSLWVLLSGAGFVVFMLVVI, FATDLIGIHSIFGAFVFGLTI, FVSGLLLPLYFATSGLKTDVA, LVVVTACAGKIVGTFVVAVMV, ALTLGFLMNTKGLVELIVLNI, and AILVLMALFTTFITTPTVMAI. The span at 585-595 shows a compositional bias: basic and acidic residues; that stretch reads DHGHSHHHQDG. Residues 585–605 form a disordered region; it reads DHGHSHHHQDGGGDGNVPENV.

This sequence belongs to the monovalent cation:proton antiporter 2 (CPA2) transporter (TC 2.A.37) family. CHX (TC 2.A.37.4) subfamily. As to expression, expressed in leaves and stems. Preferentially expressed in guards cells.

It is found in the endomembrane system. Its function is as follows. Operates as a K(+)/H(+) antiporter that maintains K(+) homeostasis in guard cells and could regulate pH. Plays a critical role in osmoregulation through the control of stomates opening. The chain is Cation/H(+) antiporter 20 (CHX20) from Arabidopsis thaliana (Mouse-ear cress).